The primary structure comprises 171 residues: MSQKNDNFIDKTFTVLADILLKVLPATKEEKKAFSYYRYGMSAQSSGDYAEALENYYEALKLEEDPFDRSYILYNIGLIYGNNGDYSKSLDYYHQALDLNSRLPQALNNIAVIYHYQGTKSSEKKEFEVAQNNFDKAASYWKKAIRLAPNNYIEAQNWLKITGKLSETEIF.

TPR repeat units lie at residues 33-66, 70-103, and 118-151; these read AFSYYRYGMSAQSSGDYAEALENYYEALKLEEDP, SYILYNIGLIYGNNGDYSKSLDYYHQALDLNSRL, and GTKSSEKKEFEVAQNNFDKAASYWKKAIRLAPNN.

It belongs to the Ycf3 family.

It localises to the plastid. Its subcellular location is the chloroplast thylakoid membrane. Essential for the assembly of the photosystem I (PSI) complex. May act as a chaperone-like factor to guide the assembly of the PSI subunits. The polypeptide is Photosystem I assembly protein Ycf3 (Emiliania huxleyi (Coccolithophore)).